A 533-amino-acid polypeptide reads, in one-letter code: MEVLGLLKFEVSGTVVTVTLSVVLLALLKWYSTSAFSRLRKLGIRHPEPSPFVGNLMFFRQGFWESHLELRERYGPLCGYYLGRRMYIVISDPDMIKEVLVENFSNFSNRMASGLEPKLIADSVLMLRDRRWEEVRGALMSAFSPEKLNEMTPLISQACELLLSHLKHSAASGDAFDIQRCYCCFTTNVVASVAFGIEVNSQDAPEDPFVQHCQRVFAFSTPRPLLALILSFPSIMVPLARILPNKNRDELNGFFNTLIRNVIALRDKQTAEERRGDFLQMVLDAQRSMSSVGVEAFDMVTEALSSAECMGDPPQRCHPTSTAKPLTVDEIAGQAFLFLIAGHEITTNTLSFITYLLATHPECQERLLKEVDLFMEKHPAPEYCNLQEGLPYLDMVVAETLRMYPPAFRFTREAAQDCEVLGQHIPAGSVLEIAVGALHHDPEHWPNPETFDPERFTAEARLQQKPFTYLPFGAGPRSCLGVRLGLLVVKLTLLQVLHKFRFEACPETQVPLQLESKSALCPKNGVYVKIVSR.

The Cytoplasmic segment spans residues 1 to 10 (MEVLGLLKFE). Residues 11–31 (VSGTVVTVTLSVVLLALLKWY) form a helical membrane-spanning segment. Residues 32 to 75 (STSAFSRLRKLGIRHPEPSPFVGNLMFFRQGFWESHLELRERYG) are Lumenal-facing. Residues 76–96 (PLCGYYLGRRMYIVISDPDMI) form a helical membrane-spanning segment. Topologically, residues 97-223 (KEVLVENFSN…QRVFAFSTPR (127 aa)) are cytoplasmic. A helical membrane pass occupies residues 224 to 244 (PLLALILSFPSIMVPLARILP). Topologically, residues 245-335 (NKNRDELNGF…LTVDEIAGQA (91 aa)) are lumenal. Residues 336-356 (FLFLIAGHEITTNTLSFITYL) traverse the membrane as a helical segment. The Cytoplasmic segment spans residues 357 to 533 (LATHPECQER…NGVYVKIVSR (177 aa)). Cysteine 479 is a binding site for heme.

This sequence belongs to the cytochrome P450 family. In terms of assembly, monomer. Heme is required as a cofactor. In terms of tissue distribution, expressed in bone marrow, spleen, lung, thymus, liver, uterus, and macrophages.

The protein resides in the endoplasmic reticulum membrane. It catalyses the reaction prostaglandin H2 = thromboxane A2. The enzyme catalyses prostaglandin H2 = (12S)-hydroxy-(5Z,8E,10E)-heptadecatrienoate + malonaldehyde. It carries out the reaction a hydroperoxyeicosatetraenoate = an oxoeicosatetraenoate + H2O. The catalysed reaction is (15S)-hydroperoxy-(5Z,8Z,11Z,13E)-eicosatetraenoate = 15-oxo-(5Z,8Z,11Z,13E)-eicosatetraenoate + H2O. It catalyses the reaction (15S)-hydroperoxy-(5Z,8Z,11Z,13E)-eicosatetraenoate + AH2 = (15S)-hydroxy-(5Z,8Z,11Z,13E)-eicosatetraenoate + A + H2O. In terms of biological role, catalyzes the conversion of prostaglandin H2 (PGH2) to thromboxane A2 (TXA2), a potent inducer of blood vessel constriction and platelet aggregation. Also cleaves PGH2 to 12-hydroxy-heptadecatrienoicacid (12-HHT) and malondialdehyde, which is known to act as a mediator of DNA damage. 12-HHT and malondialdehyde are formed stoichiometrically in the same amounts as TXA2. Additionally, displays dehydratase activity, toward (15S)-hydroperoxy-(5Z,8Z,11Z,13E)-eicosatetraenoate (15(S)-HPETE) producing 15-KETE and 15-HETE. This Rattus norvegicus (Rat) protein is Thromboxane-A synthase (Tbxas1).